The chain runs to 270 residues: Eukaryotic translation initiation factor 2 subunit beta (270 aa).

Positions 1–38 (MADEEQMERKEEATEIAPFDPTKKKKKKKVVIQDPADE) are disordered.

Belongs to the eIF-2-beta/eIF-5 family. Eukaryotic translation initiation factor 2 eIF2 is a heterotrimeric complex composed of an alpha, a beta and a gamma subunit.

The protein resides in the cytoplasm. It localises to the cytosol. Component of the eIF2 complex that functions in the early steps of protein synthesis by forming a ternary complex with GTP and initiator tRNA. This complex binds to a 40S ribosomal subunit, followed by mRNA binding to form a 43S pre-initiation complex (43S PIC). Junction of the 60S ribosomal subunit to form the 80S initiation complex is preceded by hydrolysis of the GTP bound to eIF2 and release of an eIF2-GDP binary complex. In order for eIF2 to recycle and catalyze another round of initiation, the GDP bound to eIF2 must exchange with GTP by way of a reaction catalyzed by eIF2B. This is Eukaryotic translation initiation factor 2 subunit beta from Triticum aestivum (Wheat).